A 142-amino-acid polypeptide reads, in one-letter code: DNA polymerase III subunit chi (142 aa).

This sequence belongs to the DNA polymerase III chi/HolC chain family. As to quaternary structure, DNA polymerase III contains a core (composed of alpha, epsilon and theta chains) that associates with a tau subunit. This core dimerizes to form the POLIII' complex. PolIII' associates with the gamma complex (composed of gamma, delta, delta', psi and chi chains) and with the beta chain to form the complete DNA polymerase III complex. Interacts directly with the psi subunit (holD). The only subunit of the DNA polymerase III holoenzyme known to interact with single-stranded DNA binding protein (SSB).

The enzyme catalyses DNA(n) + a 2'-deoxyribonucleoside 5'-triphosphate = DNA(n+1) + diphosphate. In terms of biological role, part of the beta sliding clamp loading complex, which hydrolyzes ATP to load the beta clamp onto primed DNA to form the DNA replication pre-initiation complex. DNA polymerase III is a complex, multichain enzyme responsible for most of the replicative synthesis in bacteria. This DNA polymerase also exhibits 3' to 5' exonuclease activity. The sequence is that of DNA polymerase III subunit chi from Pseudomonas aeruginosa (strain ATCC 15692 / DSM 22644 / CIP 104116 / JCM 14847 / LMG 12228 / 1C / PRS 101 / PAO1).